The sequence spans 44 residues: U9-ctenitoxin-Co1a (44 aa).

4 disulfide bridges follow: Cys3–Cys17, Cys10–Cys23, Cys16–Cys33, and Cys25–Cys31.

In terms of tissue distribution, expressed by the venom gland.

It is found in the secreted. Functionally, insecticidal neurotoxin that reversibly inhibits the N-methyl-D-aspartate (NMDA)-subtype of ionotropic glutamate receptor (GRIN) and inhibits inactivation of insect sodium channels (Nav). In vivo, is highly toxic to insects. The chain is U9-ctenitoxin-Co1a from Ctenus ornatus (Brazilian spider).